Here is a 346-residue protein sequence, read N- to C-terminus: Protein FAF1 (346 aa).

Disordered regions lie at residues 22 to 120 (QFGS…LRSG) and 323 to 346 (KRDI…KSRR). Positions 31 to 65 (FEDKTKNIRTEVDTRDSSGDEIDNSDHGSDFKDGT) are enriched in basic and acidic residues. Over residues 72–85 (SDEDSGNETAEENN) the composition is skewed to acidic residues.

In terms of assembly, interacts with KRR1.

It localises to the nucleus. It is found in the nucleolus. In terms of biological role, required for pre-rRNA processing and 40S ribosomal subunit assembly. Seems to act in the processing of 35S rRNA at the A(0), A(1), and A(2) cleavage sites. This Saccharomyces cerevisiae (strain ATCC 204508 / S288c) (Baker's yeast) protein is Protein FAF1 (FAF1).